A 240-amino-acid chain; its full sequence is Probable transcriptional regulatory protein HP_0162 (240 aa).

Belongs to the TACO1 family.

It is found in the cytoplasm. This is Probable transcriptional regulatory protein HP_0162 from Helicobacter pylori (strain ATCC 700392 / 26695) (Campylobacter pylori).